The chain runs to 359 residues: Glycerol-3-phosphate dehydrogenase [NAD(P)+] (359 aa).

4 residues coordinate NADPH: Thr-11, Trp-12, Arg-32, and Lys-107. Residues Lys-107 and Gly-138 each coordinate sn-glycerol 3-phosphate. Residue Ala-142 coordinates NADPH. Residues Lys-193, Asp-246, Ser-256, Arg-257, and Asn-258 each contribute to the sn-glycerol 3-phosphate site. Lys-193 functions as the Proton acceptor in the catalytic mechanism. An NADPH-binding site is contributed by Arg-257. The NADPH site is built by Val-281 and Glu-283.

This sequence belongs to the NAD-dependent glycerol-3-phosphate dehydrogenase family.

The protein localises to the cytoplasm. It carries out the reaction sn-glycerol 3-phosphate + NAD(+) = dihydroxyacetone phosphate + NADH + H(+). The catalysed reaction is sn-glycerol 3-phosphate + NADP(+) = dihydroxyacetone phosphate + NADPH + H(+). Its pathway is membrane lipid metabolism; glycerophospholipid metabolism. In terms of biological role, catalyzes the reduction of the glycolytic intermediate dihydroxyacetone phosphate (DHAP) to sn-glycerol 3-phosphate (G3P), the key precursor for phospholipid synthesis. The sequence is that of Glycerol-3-phosphate dehydrogenase [NAD(P)+] from Dehalococcoides mccartyi (strain CBDB1).